Consider the following 103-residue polypeptide: Large ribosomal subunit protein bL21 (103 aa).

It belongs to the bacterial ribosomal protein bL21 family. In terms of assembly, part of the 50S ribosomal subunit. Contacts protein L20.

In terms of biological role, this protein binds to 23S rRNA in the presence of protein L20. In Mycobacteroides abscessus (strain ATCC 19977 / DSM 44196 / CCUG 20993 / CIP 104536 / JCM 13569 / NCTC 13031 / TMC 1543 / L948) (Mycobacterium abscessus), this protein is Large ribosomal subunit protein bL21.